The chain runs to 153 residues: 3-hydroxyacyl-[acyl-carrier-protein] dehydratase FabZ (153 aa).

Residue His53 is part of the active site.

The protein belongs to the thioester dehydratase family. FabZ subfamily.

It localises to the cytoplasm. It catalyses the reaction a (3R)-hydroxyacyl-[ACP] = a (2E)-enoyl-[ACP] + H2O. Its function is as follows. Involved in unsaturated fatty acids biosynthesis. Catalyzes the dehydration of short chain beta-hydroxyacyl-ACPs and long chain saturated and unsaturated beta-hydroxyacyl-ACPs. This chain is 3-hydroxyacyl-[acyl-carrier-protein] dehydratase FabZ, found in Lawsonia intracellularis (strain PHE/MN1-00).